We begin with the raw amino-acid sequence, 116 residues long: UPF0342 protein lhv_1666 (116 aa).

This sequence belongs to the UPF0342 family.

The chain is UPF0342 protein lhv_1666 from Lactobacillus helveticus (strain DPC 4571).